We begin with the raw amino-acid sequence, 116 residues long: Large ribosomal subunit protein bL21c (116 aa).

The protein belongs to the bacterial ribosomal protein bL21 family. As to quaternary structure, part of the 50S ribosomal subunit.

The protein resides in the plastid. Its subcellular location is the chloroplast. In terms of biological role, this protein binds to 23S rRNA. The chain is Large ribosomal subunit protein bL21c from Emiliania huxleyi (Coccolithophore).